A 294-amino-acid polypeptide reads, in one-letter code: Farnesyl diphosphate synthase (294 aa).

Isopentenyl diphosphate contacts are provided by lysine 45, arginine 48, and histidine 77. Aspartate 84 and aspartate 90 together coordinate Mg(2+). Arginine 95 serves as a coordination point for (2E)-geranyl diphosphate. Arginine 96 provides a ligand contact to isopentenyl diphosphate. The (2E)-geranyl diphosphate site is built by lysine 181, threonine 182, and glutamine 220.

Belongs to the FPP/GGPP synthase family. The cofactor is Mg(2+).

The protein resides in the cytoplasm. The enzyme catalyses isopentenyl diphosphate + (2E)-geranyl diphosphate = (2E,6E)-farnesyl diphosphate + diphosphate. This chain is Farnesyl diphosphate synthase (ispA), found in Buchnera aphidicola subsp. Schizaphis graminum (strain Sg).